We begin with the raw amino-acid sequence, 384 residues long: Flap endonuclease 1 (384 aa).

The tract at residues 1 to 105 (MGIKGLTKLL…GELAKRKDKR (105 aa)) is N-domain. Asp-34 provides a ligand contact to Mg(2+). Residue Arg-71 participates in DNA binding. The Mg(2+) site is built by Asp-87, Glu-159, Glu-161, Asp-180, and Asp-182. An I-domain region spans residues 123-254 (EIEKLSKRTV…VNALKYIKQY (132 aa)). Glu-159 is a binding site for DNA. DNA-binding residues include Gly-232 and Asp-234. Residue Asp-234 coordinates Mg(2+). An interaction with PCNA region spans residues 337 to 345 (GQNRLETFF). The interval 353-384 (STVGKRKEPEKGKGKFGAAGGKKSKGVTKRKF) is disordered. Over residues 374–384 (KKSKGVTKRKF) the composition is skewed to basic residues.

Belongs to the XPG/RAD2 endonuclease family. FEN1 subfamily. As to quaternary structure, interacts with PCNA. Three molecules of FEN1 bind to one PCNA trimer with each molecule binding to one PCNA monomer. PCNA stimulates the nuclease activity without altering cleavage specificity. Mg(2+) serves as cofactor. In terms of processing, phosphorylated. Phosphorylation upon DNA damage induces relocalization to the nuclear plasma.

The protein resides in the nucleus. It is found in the nucleolus. Its subcellular location is the nucleoplasm. It localises to the mitochondrion. Structure-specific nuclease with 5'-flap endonuclease and 5'-3' exonuclease activities involved in DNA replication and repair. During DNA replication, cleaves the 5'-overhanging flap structure that is generated by displacement synthesis when DNA polymerase encounters the 5'-end of a downstream Okazaki fragment. It enters the flap from the 5'-end and then tracks to cleave the flap base, leaving a nick for ligation. Also involved in the long patch base excision repair (LP-BER) pathway, by cleaving within the apurinic/apyrimidinic (AP) site-terminated flap. Acts as a genome stabilization factor that prevents flaps from equilibrating into structures that lead to duplications and deletions. Also possesses 5'-3' exonuclease activity on nicked or gapped double-stranded DNA, and exhibits RNase H activity. Also involved in replication and repair of rDNA and in repairing mitochondrial DNA. In Micromonas commoda (strain RCC299 / NOUM17 / CCMP2709) (Picoplanktonic green alga), this protein is Flap endonuclease 1.